Consider the following 364-residue polypeptide: Valine dehydrogenase (364 aa).

Residue K91 is part of the active site. NAD(+) is bound at residue 191–197 (GVGKVGH).

The protein belongs to the Glu/Leu/Phe/Val dehydrogenases family. As to quaternary structure, homodimer.

Its subcellular location is the cytoplasm. The enzyme catalyses L-valine + NAD(+) + H2O = 3-methyl-2-oxobutanoate + NH4(+) + NADH + H(+). Its pathway is amino-acid degradation; L-valine degradation. Inhibited by pyridoxal 5'-phosphate (PLP). Oxidative deamination of branched-chain amino acids. Oxidizes L-valine and L-alpha-aminobutyric acid efficiently, and L-alanine and L-isoleucine less efficiently. D-valine and L-glutamate were not substrates for the enzyme. The catabolism of valine is the major source of fatty acid precursors for macrolide biosynthesis and a vital source of antibiotic precursors. The protein is Valine dehydrogenase of Streptomyces albus (strain ATCC 21838 / DSM 41398 / FERM P-419 / JCM 4703 / NBRC 107858).